The chain runs to 428 residues: Glutamate-1-semialdehyde 2,1-aminomutase (428 aa).

Position 266 is an N6-(pyridoxal phosphate)lysine (Lys266).

The protein belongs to the class-III pyridoxal-phosphate-dependent aminotransferase family. HemL subfamily. In terms of assembly, homodimer. It depends on pyridoxal 5'-phosphate as a cofactor.

It is found in the cytoplasm. It catalyses the reaction (S)-4-amino-5-oxopentanoate = 5-aminolevulinate. Its pathway is porphyrin-containing compound metabolism; protoporphyrin-IX biosynthesis; 5-aminolevulinate from L-glutamyl-tRNA(Glu): step 2/2. This is Glutamate-1-semialdehyde 2,1-aminomutase from Herminiimonas arsenicoxydans.